Consider the following 718-residue polypeptide: MNLKPTILLFTILFLKCATFEVNEETERIVEDAVMRALDSRASENSESEQTSQHIIVSQQANSDSKSAQFTGEVLEEATRILVREFGLEILPAANEVIERWRNEEEELLQSSETTTTTEHPDPTRSKRSAIFRSKRQANRRCSSPPINCNNRFHTSIRSITGLCNNRQNSDLGNSVSPLRRILGAASYADGLGRIRTRSVNGGELPSARLISNRIHDDRNNQVFSPSINHLHMIIGQFIAHDVVFMPSSVARDGGALDCSACNSPQRVSPNCAPITIPRNDPYFNTPCMRLTRALNGQENFGVRSQIGQNSHFLDLSPVYGSADCEAETVRSFQEGKMLTFDDLGYTLPPQNANDSNCQSSAPFHCFTCGDFRNSLHPALIPVHTILIKEHNRLAEQVRVARPRFNDEQIFQLVRKIMIGMWQHIVYNEYIPKYLPRRTIRNFALRPLRNGVHRGYSTSVDPSISAEFAGAAFRFGHSQSRFDFPRLTENGRPAGNYDLGNDIFYADQMYLTRIGGWEPVMNGMVRMPAMKSDRYFSFGIRNQMFEIRGRNGSGVDLVSINIQRGRDMGLFPYIQYRQLVGLPTVTSFNELNTTFSQENIQALRNVYSDPADIDLYVGIMLEEPLSGGQLGPTASFMIGEQFRALKRGDRFFYESIAEGTDNFTQEEISELRNKTSLAKIICTNMDFAARINTDIFDHRSRQVACTSLPQLDIDRFLR.

The signal sequence occupies residues 1–19 (MNLKPTILLFTILFLKCAT). Residues 20–146 (FEVNEETERI…QANRRCSSPP (127 aa)) constitute a propeptide that is removed on maturation. Disordered regions lie at residues 41–64 (RASE…ANSD) and 108–144 (LLQS…RCSS). Positions 45-64 (NSESEQTSQHIIVSQQANSD) are enriched in polar residues. Residues 109–118 (LQSSETTTTT) show a composition bias toward low complexity. The segment covering 126-139 (SKRSAIFRSKRQAN) has biased composition (basic residues). Cys149 and Cys164 are oxidised to a cystine. The Proton acceptor role is filled by His241. Residue Asp242 participates in Ca(2+) binding. Cys262 and Cys272 are oxidised to a cystine. Ser311, Phe313, Asp315, and Ser317 together coordinate Ca(2+). A glycan (N-linked (GlcNAc...) asparagine) is linked at Asn354. Residues Cys358 and Cys366 are joined by a disulfide bond. His477 is a binding site for heme b. Residues Asn551, Asn592, Asn662, and Asn673 are each glycosylated (N-linked (GlcNAc...) asparagine). A disulfide bond links Cys682 and Cys705.

Belongs to the peroxidase family. It depends on heme b as a cofactor. Expressed in the hypodermis and gland cells of the pharynx. Specifically, there is low and transient expression from the distal bulb of the pharynx to the anterior of the buccal cavity. Whole body expression levels increase upon entry into the dauer phase.

The protein localises to the secreted. The catalysed reaction is 2 a phenolic donor + H2O2 = 2 a phenolic radical donor + 2 H2O. Its function is as follows. Peroxidase which is involved in maintaining the cuticle integrity in the hypodermis and pharynx. It thus plays a role in conferring resistance against Gram-positive bacteria such as E.faecalis, S.aureus and C.diphtheriae, and yeast such as C.albicans. The protein is Heme peroxidase 2 of Caenorhabditis elegans.